The sequence spans 1183 residues: DNA-directed RNA polymerase subunit beta (1183 aa).

Acidic residues predominate over residues 1149 to 1162 (DNEIEMADVDDEDA). A disordered region spans residues 1149–1183 (DNEIEMADVDDEDATERKVDLQQKDVPETQKETTD). Residues 1163–1183 (TERKVDLQQKDVPETQKETTD) are compositionally biased toward basic and acidic residues.

It belongs to the RNA polymerase beta chain family. The RNAP catalytic core consists of 2 alpha, 1 beta, 1 beta' and 1 omega subunit. When a sigma factor is associated with the core the holoenzyme is formed, which can initiate transcription.

It catalyses the reaction RNA(n) + a ribonucleoside 5'-triphosphate = RNA(n+1) + diphosphate. Its function is as follows. DNA-dependent RNA polymerase catalyzes the transcription of DNA into RNA using the four ribonucleoside triphosphates as substrates. This is DNA-directed RNA polymerase subunit beta from Staphylococcus haemolyticus (strain JCSC1435).